The following is a 502-amino-acid chain: Glucose-6-phosphate isomerase (502 aa).

E331 functions as the Proton donor in the catalytic mechanism. Catalysis depends on residues H362 and K471.

The protein belongs to the GPI family.

It localises to the cytoplasm. It carries out the reaction alpha-D-glucose 6-phosphate = beta-D-fructose 6-phosphate. The protein operates within carbohydrate biosynthesis; gluconeogenesis. It participates in carbohydrate degradation; glycolysis; D-glyceraldehyde 3-phosphate and glycerone phosphate from D-glucose: step 2/4. Its function is as follows. Catalyzes the reversible isomerization of glucose-6-phosphate to fructose-6-phosphate. This Xylella fastidiosa (strain 9a5c) protein is Glucose-6-phosphate isomerase.